We begin with the raw amino-acid sequence, 968 residues long: RNA polymerase-associated protein RapA (968 aa).

The Helicase ATP-binding domain maps to 164–334; that stretch reads DVGRRHAPRV…FARLRLLDPN (171 aa). Position 177–184 (177–184) interacts with ATP; it reads DEVGLGKT. Positions 280 to 283 match the DEAH box motif; it reads DEAH. Positions 490–644 constitute a Helicase C-terminal domain; it reads RVEWLMGYLT…TCPTGRTVYD (155 aa).

It belongs to the SNF2/RAD54 helicase family. RapA subfamily. Interacts with the RNAP. Has a higher affinity for the core RNAP than for the holoenzyme. Its ATPase activity is stimulated by binding to RNAP.

Its function is as follows. Transcription regulator that activates transcription by stimulating RNA polymerase (RNAP) recycling in case of stress conditions such as supercoiled DNA or high salt concentrations. Probably acts by releasing the RNAP, when it is trapped or immobilized on tightly supercoiled DNA. Does not activate transcription on linear DNA. Probably not involved in DNA repair. The protein is RNA polymerase-associated protein RapA of Klebsiella pneumoniae subsp. pneumoniae (strain ATCC 700721 / MGH 78578).